Consider the following 218-residue polypeptide: Pyridoxine/pyridoxamine 5'-phosphate oxidase (218 aa).

Residues R14–Y17 and K72 contribute to the substrate site. Residues R67–K72, Y82–T83, R88, K89, and Q111 contribute to the FMN site. 3 residues coordinate substrate: Y129, R133, and S137. FMN-binding positions include Q146–S147 and W191. R197–H199 is a substrate binding site. Residue R201 coordinates FMN.

This sequence belongs to the pyridoxamine 5'-phosphate oxidase family. Homodimer. The cofactor is FMN.

The enzyme catalyses pyridoxamine 5'-phosphate + O2 + H2O = pyridoxal 5'-phosphate + H2O2 + NH4(+). It carries out the reaction pyridoxine 5'-phosphate + O2 = pyridoxal 5'-phosphate + H2O2. Its pathway is cofactor metabolism; pyridoxal 5'-phosphate salvage; pyridoxal 5'-phosphate from pyridoxamine 5'-phosphate: step 1/1. It participates in cofactor metabolism; pyridoxal 5'-phosphate salvage; pyridoxal 5'-phosphate from pyridoxine 5'-phosphate: step 1/1. Functionally, catalyzes the oxidation of either pyridoxine 5'-phosphate (PNP) or pyridoxamine 5'-phosphate (PMP) into pyridoxal 5'-phosphate (PLP). In Escherichia coli (strain 55989 / EAEC), this protein is Pyridoxine/pyridoxamine 5'-phosphate oxidase.